Here is a 169-residue protein sequence, read N- to C-terminus: uncharacterized protein (169 aa).

The Nudix hydrolase domain occupies 28-157; sequence ELHLVVHVCI…EFIPYFFLNQ (130 aa). Residues 65–87 carry the Nudix box motif; sequence AGSALKGETSRQAAEREVKEELG. The Mg(2+) site is built by Glu-81 and Glu-85.

Belongs to the Nudix hydrolase family. It depends on Mg(2+) as a cofactor.

This is an uncharacterized protein from Listeria innocua serovar 6a (strain ATCC BAA-680 / CLIP 11262).